The chain runs to 223 residues: Transcriptional regulator HMO1 (223 aa).

Disordered stretches follow at residues 69–89 (IEATESKKKRKQEKDPNAPKK) and 165–223 (DGSA…HGSP). Over residues 70–86 (EATESKKKRKQEKDPNA) the composition is skewed to basic and acidic residues. Positions 87–160 (PKKPLTMFFQ…IYNIEKKKYE (74 aa)) form a DNA-binding region, HMG box. A compositionally biased stretch (basic residues) spans 204–223 (KKKKKTEKKEKKKKSGHGSP).

It is found in the nucleus. Functionally, transcription factor that binds upstream of hexose and ergosterol metabolism, as well as cell cycle genes. Activates pseudohyphal growth. The sequence is that of Transcriptional regulator HMO1 (HMO1) from Candida albicans (strain SC5314 / ATCC MYA-2876) (Yeast).